Here is a 322-residue protein sequence, read N- to C-terminus: UDP-N-acetylenolpyruvoylglucosamine reductase (322 aa).

An FAD-binding PCMH-type domain is found at 36-202 (RAGGPAQVLF…TSVLFEGVPG (167 aa)). Residue arginine 182 is part of the active site. The active-site Proton donor is the serine 231. Glutamate 301 is an active-site residue.

It belongs to the MurB family. FAD serves as cofactor.

Its subcellular location is the cytoplasm. It carries out the reaction UDP-N-acetyl-alpha-D-muramate + NADP(+) = UDP-N-acetyl-3-O-(1-carboxyvinyl)-alpha-D-glucosamine + NADPH + H(+). Its pathway is cell wall biogenesis; peptidoglycan biosynthesis. Its function is as follows. Cell wall formation. The protein is UDP-N-acetylenolpyruvoylglucosamine reductase of Brucella suis biovar 1 (strain 1330).